The following is a 1055-amino-acid chain: MDS1 and EVI1 complex locus protein EVI1-A (1055 aa).

3 consecutive C2H2-type zinc fingers follow at residues 21–48 (YRCE…VTPH), 75–97 (HECK…LLSH), and 103–125 (YKCD…QMSH). The C2H2-type 4; degenerate zinc finger occupies 131–155 (YECENCSKQVFTDPSNLQRHIRSQH). C2H2-type zinc fingers lie at residues 161–183 (HACS…KHIH) and 189–211 (FVCE…KRMH). The C2H2-type 7; atypical zinc-finger motif lies at 218–240 (IKCKDCGQMFSTTSSLNKHRRFC). Disordered stretches follow at residues 324 to 345 (PVKG…VNQP), 372 to 423 (FITE…SDKD), and 531 to 621 (VPLK…PELP). The segment covering 332–345 (EQSSKSQSPHVNQP) has biased composition (polar residues). Residues 381-392 (RPHEKISDHSES) show a composition bias toward basic and acidic residues. The span at 399 to 413 (STPSGSDLETTSGSD) shows a compositional bias: polar residues. The Nuclear localization signal motif lies at 422–435 (KDKLKENGKLYKDK). The span at 531-566 (VPLKIEPESPKETKKVQKGKTESPFDLTTKRKEEKA) shows a compositional bias: basic and acidic residues. Positions 554–558 (PFDLT) match the CTBP-binding motif 1 motif. Positions 569–583 (NVPSKSGAPTSSNHD) are enriched in polar residues. The short motif at 585 to 589 (PLDLS) is the CTBP-binding motif 2 element. Residues 591-601 (GSRSRAATTKQ) are compositionally biased toward polar residues. Positions 602–621 (TEPRKNHIFNEKKDMDPELP) are enriched in basic and acidic residues. 3 consecutive C2H2-type zinc fingers follow at residues 734–756 (YTCR…LRTH), 762–785 (YRCK…RNIH), and 791–813 (FKCH…LKKH). Disordered regions lie at residues 813–837 (HENG…GPIL) and 922–957 (SVDE…EDFK). The span at 816 to 827 (GNLSGTAASSPH) shows a compositional bias: polar residues. Positions 944–954 (DDEDDDDDEEE) are enriched in acidic residues.

In terms of assembly, homooligomer. Interacts with ctbp. In terms of tissue distribution, expressed dynamically during embryonic development; in the developing pronephros, specific areas of the brain (forebrain, midbrain and hindbrain), and in the majority of the visceral arch, and head mesenchyme derived from neural crest cells. Within the pronephros, expressed in the ventroposterior region of the pronephros anlagen from stage 20 (and is absent from the splanchnic layer that forms the glomus), then expression becomes restricted to the distal tubule and duct by the tadpole stage. In adults, expressed in various tissues including kidney, lung, testis, spleen and stomach.

It is found in the nucleus. Its subcellular location is the nucleus speckle. In terms of biological role, transcriptional repressor during pronephros development. Plays a role in regionalization of the pronephros; may promote formation of the distal tubule and duct over formation of the glomus and proximal tubule. In Xenopus laevis (African clawed frog), this protein is MDS1 and EVI1 complex locus protein EVI1-A (mecom-a).